Here is a 263-residue protein sequence, read N- to C-terminus: Protein M1627_2099 (263 aa).

Belongs to the CinA family.

This is Protein M1627_2099 from Saccharolobus islandicus (strain M.16.27) (Sulfolobus islandicus).